The primary structure comprises 79 residues: Conotoxin VnMEKL-024 (79 aa).

Positions 1–19 (MQKLTILLLVAAVLMSTQA) are cleaved as a signal peptide. A propeptide spanning residues 20–50 (LIRGGVEKRQEAKRNFFSKRKTTAESWWEGE) is cleaved from the precursor. Disulfide bonds link cysteine 51/cysteine 65, cysteine 58/cysteine 69, and cysteine 64/cysteine 76.

It belongs to the conotoxin O2 superfamily. As to expression, expressed by the venom duct.

The protein localises to the secreted. In Conus ventricosus (Mediterranean cone), this protein is Conotoxin VnMEKL-024.